A 56-amino-acid polypeptide reads, in one-letter code: Alpha-conotoxin EpI (56 aa).

The first 16 residues, 1-16, serve as a signal peptide directing secretion; sequence MFTVFLLVVLATTVVS. A propeptide spanning residues 17-39 is cleaved from the precursor; that stretch reads FTSDRASDSRKDAASGLIALTIK. 2 disulfide bridges follow: C41/C47 and C42/C55. Residues 43–45 are ser-Xaa-Pro motif, crucial for potent interaction with nAChR; the sequence is SDP. Y54 carries the sulfotyrosine modification. At C55 the chain carries Cysteine amide.

It belongs to the conotoxin A superfamily. Post-translationally, both tyrosine sulfation and C-terminal amidation are important for activity and structure stability. In terms of tissue distribution, expressed by the venom duct.

The protein resides in the secreted. Its function is as follows. Alpha-conotoxins act on postsynaptic membranes, they bind to the nicotinic acetylcholine receptors (nAChR) and thus inhibit them. This native peptide blocks mammalian nicotinic acetylcholine receptors composed of alpha-3-beta-2/CHRNA3-CHRNB2 and alpha-3-beta-4/CHRNA3-CHRNB4 subunits. This Conus episcopatus (Bishop's cone) protein is Alpha-conotoxin EpI.